A 326-amino-acid chain; its full sequence is Protein GVP36 (326 aa).

An N-acetylserine modification is found at Ser2. At Ser2 the chain carries Phosphoserine. Glycyl lysine isopeptide (Lys-Gly) (interchain with G-Cter in ubiquitin) cross-links involve residues Lys13, Lys305, and Lys313. The segment at 299 to 326 (AEEPEAKPEVAEEEKPQTAISMNDEDDA) is disordered. Residues 302-314 (PEAKPEVAEEEKP) show a composition bias toward basic and acidic residues. The residue at position 319 (Ser319) is a Phosphoserine.

The protein resides in the golgi apparatus membrane. In Saccharomyces cerevisiae (strain ATCC 204508 / S288c) (Baker's yeast), this protein is Protein GVP36 (GVP36).